The chain runs to 722 residues: Bifunctional UDP-N-acetylglucosamine 2-epimerase/N-acetylmannosamine kinase (722 aa).

R19, S23, R113, H220, and N253 together coordinate UDP. Residues K259, E271, K280, and H281 each coordinate CMP-N-acetyl-beta-neuraminate. Residues V282, S301, S302, E307, and R321 each coordinate UDP. The segment at 406–722 (TLSALAVDLG…VLDYTTRRIH (317 aa)) is N-acetylmannosamine kinase. Residue D413 participates in Mg(2+) binding. G416 contacts an N-acyl-D-mannosamine 6-phosphate. Residues T417, N418, and R420 each contribute to the ADP site. Residues G476, R477, T489, N516, D517, and G545 each coordinate an N-acyl-D-mannosamine 6-phosphate. Positions 476, 477, 489, 516, and 517 each coordinate an N-acyl-D-mannosamine. The active site involves D517. Residues E566 and H569 each coordinate an N-acyl-D-mannosamine. H569 lines the an N-acyl-D-mannosamine 6-phosphate pocket. Zn(2+) is bound by residues H569, C579, C581, and C586. E588 is an an N-acyl-D-mannosamine 6-phosphate binding site. An an N-acyl-D-mannosamine-binding site is contributed by E588.

It in the N-terminal section; belongs to the UDP-N-acetylglucosamine 2-epimerase family. This sequence in the C-terminal section; belongs to the ROK (NagC/XylR) family. In terms of assembly, homodimer. Homotetramer. Homohexamer. The hexameric form exhibits both enzyme activities, whereas the dimeric form only catalyzes the phosphorylation of N-acyl-D-mannosamine. Post-translationally, phosphorylated. Phosphorylation by PKC activates the UDP-N-acetylglucosamine 2-epimerase activity.

Its subcellular location is the cytoplasm. The protein resides in the cytosol. The enzyme catalyses UDP-N-acetyl-alpha-D-glucosamine + H2O = aldehydo-N-acetyl-D-mannosamine + UDP + H(+). The catalysed reaction is an N-acyl-D-mannosamine + ATP = an N-acyl-D-mannosamine 6-phosphate + ADP + H(+). Its pathway is amino-sugar metabolism; N-acetylneuraminate biosynthesis. Its activity is regulated as follows. The UDP-N-acetylglucosamine 2-epimerase activity, in contrast to the N-acetylmannosamine kinase activity, exhibits allosteric regulation by cytidine monophosphate-N-acetylneuraminic acid (CMP-Neu5Ac), the end product of neuraminic acid biosynthesis. Moreover, the activity is contingent upon the oligomeric state of the enzyme. The monomeric form is inactive, while the dimeric form selectively catalyzes the phosphorylation of N-acetylmannosamine. The hexameric form, on the other hand, demonstrates full proficiency in both enzyme activities. Furthermore, the UDP-N-acetylglucosamine 2-epimerase activity is increased by PKC-mediated phosphorylation. Functionally, bifunctional enzyme that possesses both UDP-N-acetylglucosamine 2-epimerase and N-acetylmannosamine kinase activities, and serves as the initiator of the biosynthetic pathway leading to the production of N-acetylneuraminic acid (NeuAc), a critical precursor in the synthesis of sialic acids. By catalyzing this pivotal and rate-limiting step in sialic acid biosynthesis, this enzyme assumes a pivotal role in governing the regulation of cell surface sialylation, playing a role in embryonic angiogenesis. Sialic acids represent a category of negatively charged sugars that reside on the surface of cells as terminal components of glycoconjugates and mediate important functions in various cellular processes, including cell adhesion, signal transduction, and cellular recognition. In Cricetulus griseus (Chinese hamster), this protein is Bifunctional UDP-N-acetylglucosamine 2-epimerase/N-acetylmannosamine kinase (GNE).